Here is a 266-residue protein sequence, read N- to C-terminus: Ribosomal RNA small subunit methyltransferase A (266 aa).

S-adenosyl-L-methionine contacts are provided by N10, I12, G37, E58, D82, and N105.

It belongs to the class I-like SAM-binding methyltransferase superfamily. rRNA adenine N(6)-methyltransferase family. RsmA subfamily.

The protein localises to the cytoplasm. It carries out the reaction adenosine(1518)/adenosine(1519) in 16S rRNA + 4 S-adenosyl-L-methionine = N(6)-dimethyladenosine(1518)/N(6)-dimethyladenosine(1519) in 16S rRNA + 4 S-adenosyl-L-homocysteine + 4 H(+). Functionally, specifically dimethylates two adjacent adenosines (A1518 and A1519) in the loop of a conserved hairpin near the 3'-end of 16S rRNA in the 30S particle. May play a critical role in biogenesis of 30S subunits. The protein is Ribosomal RNA small subunit methyltransferase A of Mycoplasma capricolum subsp. capricolum (strain California kid / ATCC 27343 / NCTC 10154).